The chain runs to 219 residues: Mitochondrial fission factor homolog A (219 aa).

The Cytoplasmic portion of the chain corresponds to 1 to 199 (MAEINRMQYE…ENKERVKHEM (199 aa)). Residues 164-194 (DLALADAASLRRQIIKLNRRLLLLEEENKER) are a coiled coil. Residues 200 to 217 (TMYSIIIIFGLLNSWLWL) traverse the membrane as a helical; Anchor for type IV membrane protein segment. At 218–219 (RR) the chain is on the extracellular side.

It belongs to the Tango11 family.

The protein resides in the mitochondrion outer membrane. Its subcellular location is the peroxisome. It localises to the cytoplasmic vesicle. The protein localises to the secretory vesicle. It is found in the synaptic vesicle. Plays a role in mitochondrial and peroxisomal fission. Promotes the recruitment and association of the fission mediator dynamin-related protein 1 (DNM1L) to the mitochondrial surface. The polypeptide is Mitochondrial fission factor homolog A (mff-a) (Xenopus laevis (African clawed frog)).